A 329-amino-acid chain; its full sequence is Glycerol-3-phosphate dehydrogenase [NAD(P)+] (329 aa).

Positions 13, 14, 34, and 105 each coordinate NADPH. Sn-glycerol 3-phosphate is bound by residues Lys-105, Gly-134, and Ser-136. Ala-138 contacts NADPH. The sn-glycerol 3-phosphate site is built by Lys-189, Asp-242, Ser-252, Arg-253, and Asn-254. Residue Lys-189 is the Proton acceptor of the active site. Arg-253 contacts NADPH. Residues Val-277 and Glu-279 each coordinate NADPH.

It belongs to the NAD-dependent glycerol-3-phosphate dehydrogenase family.

The protein resides in the cytoplasm. It catalyses the reaction sn-glycerol 3-phosphate + NAD(+) = dihydroxyacetone phosphate + NADH + H(+). The catalysed reaction is sn-glycerol 3-phosphate + NADP(+) = dihydroxyacetone phosphate + NADPH + H(+). Its pathway is membrane lipid metabolism; glycerophospholipid metabolism. In terms of biological role, catalyzes the reduction of the glycolytic intermediate dihydroxyacetone phosphate (DHAP) to sn-glycerol 3-phosphate (G3P), the key precursor for phospholipid synthesis. The sequence is that of Glycerol-3-phosphate dehydrogenase [NAD(P)+] from Legionella pneumophila (strain Lens).